A 512-amino-acid chain; its full sequence is NAD-dependent deacetylase sir2A (512 aa).

A UBP-type zinc finger spans residues 7 to 110; the sequence is IECIHLKDEY…EILENIKSSN (104 aa). Zn(2+)-binding residues include Cys9, His11, Cys34, Cys37, Cys46, Cys49, Cys54, His61, His65, His71, Cys84, and Cys87. Residues 113-122 show a composition bias toward basic and acidic residues; the sequence is DKIVPKKDQK. Residues 113–196 form a disordered region; sequence DKIVPKKDQK…DESSSEGEES (84 aa). A compositionally biased stretch (low complexity) spans 130 to 175; it reads VVPSASITTSSTTTSISKQTTVNNTTTTSSSSTTTTTTTTSTTINN. A compositionally biased stretch (acidic residues) spans 176-195; it reads NEEEEESESETDESSSEGEE. One can recognise a Deacetylase sirtuin-type domain in the interval 231–503; it reads CVLKKPTIEE…LDLIKLLGWE (273 aa). Catalysis depends on His361, which acts as the Proton acceptor. 4 residues coordinate Zn(2+): Cys369, Cys372, Cys393, and Cys399.

This sequence belongs to the sirtuin family. It depends on Zn(2+) as a cofactor.

The catalysed reaction is N(6)-acetyl-L-lysyl-[protein] + NAD(+) + H2O = 2''-O-acetyl-ADP-D-ribose + nicotinamide + L-lysyl-[protein]. Functionally, NAD-dependent deacetylase, which plays an important role in the regulation of transcriptional repression. The chain is NAD-dependent deacetylase sir2A (sir2A) from Dictyostelium discoideum (Social amoeba).